We begin with the raw amino-acid sequence, 624 residues long: Adhesion and hyphal regulator 1 (624 aa).

Positions 19-46 form a DNA-binding region, zn(2)-C6 fungal-type; sequence CVTCRDRHIKCDEQQPVCKNCQKSNRKC. Disordered regions lie at residues 63 to 84 and 230 to 250; these read DDNKPKELQQNEQPNSSHYAFP and PQHHPMLDTSQHQETTSTDPN. The segment covering 237–250 has biased composition (polar residues); that stretch reads DTSQHQETTSTDPN.

Interacts with MCM1.

It is found in the nucleus. Transcription factor that binds the promoters of genes involved in biofilm formation, which include several key adhesion genes, and recruits MCM1 to these sites. Plays an important role in hyphal growth and virulence. Promotes conversion of opaque cells to white phase, but needs existence of EFG1, a key regulator required for maintenance of the white state. The sequence is that of Adhesion and hyphal regulator 1 (AHR1) from Candida albicans (strain SC5314 / ATCC MYA-2876) (Yeast).